A 218-amino-acid polypeptide reads, in one-letter code: CTP-dependent diacylglycerol kinase 1 (218 aa).

Residues 1–19 (MSTKLTWSQWSKKHEIPRK) lie on the Lumenal side of the membrane. Residues 20 to 37 (ALHTSIGFFALLLQGCGY) traverse the membrane as a helical segment. A topological domain (cytoplasmic) is located at residue H38. A helical transmembrane segment spans residues 39 to 59 (AAQIIPVIEIGFIPAFTGDVI). Residues 60 to 88 (RFNWPAFSRLYNRVIGPLMRESEKNAWNG) lie on the Lumenal side of the membrane. A helical transmembrane segment spans residues 89–109 (VIFYMIGVWIVLKVFPEEIAV). Topologically, residues 110-142 (MSVLLLSWCDTTASTVGRKWGKYTPKIAKNKSL) are cytoplasmic. Residues 143-163 (AGSLGAFVCGVFCCYVYWGLF) traverse the membrane as a helical segment. Topologically, residues 164-179 (RTGPDSLAAQSRIPFP) are lumenal. 2 helical membrane passes run 180-200 (WLCLINGFIGAFAEAMDVWGL) and 201-217 (DDNLVIPVVSACLLYLI). A topological domain (lumenal) is located at residue M218.

It belongs to the DGK1 family. Ca(2+) is required as a cofactor. It depends on Mg(2+) as a cofactor.

Its subcellular location is the endoplasmic reticulum membrane. The protein localises to the nucleus membrane. It carries out the reaction a 1,2-diacyl-sn-glycerol + CTP = a 1,2-diacyl-sn-glycero-3-phosphate + CDP + H(+). CTP-dependent diacylglycerol kinase that catalyzes the phosphorylation of diacylglycerol (DAG) to phosphatidate (PA). Controls phosphatidate levels at the nuclear envelope. Counteracts the activity of PA phosphatase ned1. May be involved in vesicle trafficking between the endoplasmic reticulum and the Golgi apparatus. Involved in pre-tRNA splicing. This Schizosaccharomyces pombe (strain 972 / ATCC 24843) (Fission yeast) protein is CTP-dependent diacylglycerol kinase 1 (ptp4).